The sequence spans 84 residues: Putative antitoxin VapB7 (84 aa).

In terms of biological role, antitoxin component of a possible type II toxin-antitoxin (TA) system. The cognate toxin is VapC7. This chain is Putative antitoxin VapB7 (vapB7), found in Mycobacterium tuberculosis (strain ATCC 25618 / H37Rv).